A 388-amino-acid chain; its full sequence is Arginine biosynthesis bifunctional protein ArgJ (388 aa).

Substrate is bound by residues Thr-150, Lys-172, Thr-183, Glu-263, Asn-383, and Thr-388. The active-site Nucleophile is the Thr-183.

This sequence belongs to the ArgJ family. In terms of assembly, heterotetramer of two alpha and two beta chains.

It is found in the cytoplasm. The catalysed reaction is N(2)-acetyl-L-ornithine + L-glutamate = N-acetyl-L-glutamate + L-ornithine. It carries out the reaction L-glutamate + acetyl-CoA = N-acetyl-L-glutamate + CoA + H(+). It participates in amino-acid biosynthesis; L-arginine biosynthesis; L-ornithine and N-acetyl-L-glutamate from L-glutamate and N(2)-acetyl-L-ornithine (cyclic): step 1/1. It functions in the pathway amino-acid biosynthesis; L-arginine biosynthesis; N(2)-acetyl-L-ornithine from L-glutamate: step 1/4. Functionally, catalyzes two activities which are involved in the cyclic version of arginine biosynthesis: the synthesis of N-acetylglutamate from glutamate and acetyl-CoA as the acetyl donor, and of ornithine by transacetylation between N(2)-acetylornithine and glutamate. In Corynebacterium efficiens (strain DSM 44549 / YS-314 / AJ 12310 / JCM 11189 / NBRC 100395), this protein is Arginine biosynthesis bifunctional protein ArgJ.